Here is a 291-residue protein sequence, read N- to C-terminus: Acetylglutamate kinase (291 aa).

Substrate-binding positions include 61 to 62, Arg83, and Asn187; that span reads GG.

It belongs to the acetylglutamate kinase family. ArgB subfamily.

It localises to the cytoplasm. The enzyme catalyses N-acetyl-L-glutamate + ATP = N-acetyl-L-glutamyl 5-phosphate + ADP. Its pathway is amino-acid biosynthesis; L-arginine biosynthesis; N(2)-acetyl-L-ornithine from L-glutamate: step 2/4. In terms of biological role, catalyzes the ATP-dependent phosphorylation of N-acetyl-L-glutamate. This is Acetylglutamate kinase from Methanoregula boonei (strain DSM 21154 / JCM 14090 / 6A8).